The chain runs to 228 residues: Max-interacting protein 1 (228 aa).

Disordered stretches follow at residues 30-76 and 160-228; these read YASS…NELE and SIGS…SFAS. The span at 43–56 shows a compositional bias: basic residues; sequence QHSKPPRRLSRAQK. The span at 57-70 shows a compositional bias: polar residues; that stretch reads HSSGSSNTSTANRS. Residues 67 to 119 enclose the bHLH domain; the sequence is ANRSTHNELEKNRRAHLRLCLERLKVLIPLGPDCTRHTTLGLLNKAKAHIKKL. Acidic residues predominate over residues 173-183; that stretch reads EREEIEVDVES. A compositionally biased stretch (polar residues) spans 207-228; the sequence is SLQSVGSDEGYSSASVKLSFAS.

In terms of assembly, efficient DNA binding requires dimerization with another bHLH protein. Binds DNA as a heterodimer with MAX. Interacts with SMC3. Interacts with RNF17.

It localises to the nucleus. In terms of biological role, transcriptional repressor. MXI1 binds with MAX to form a sequence-specific DNA-binding protein complex which recognizes the core sequence 5'-CAC[GA]TG-3'. MXI1 thus antagonizes MYC transcriptional activity by competing for MAX. Isoform Short, which lacks a segment, has a much stronger suppressive potential and associates with a SIN3 homologous protein. The chain is Max-interacting protein 1 (Mxi1) from Mus musculus (Mouse).